The chain runs to 258 residues: Uridylate cyclase (258 aa).

Residues 50–190 (AAIFIDLRGS…DVVNKASKMC (141 aa)) enclose the Guanylate cyclase domain. Phenylalanine 53 serves as a coordination point for a ribonucleoside 5'-triphosphate. Residues aspartate 55 and aspartate 102 each coordinate Mn(2+).

The protein belongs to the adenylyl cyclase class-4/guanylyl cyclase family. Pyrimidine cyclase subfamily. As to quaternary structure, homodimer. Mn(2+) is required as a cofactor.

It localises to the cytoplasm. It catalyses the reaction UTP = 3',5'-cyclic UMP + diphosphate. Functionally, pycsar (pyrimidine cyclase system for antiphage resistance) provides immunity against bacteriophage. The pyrimidine cyclase (PycC) synthesizes cyclic nucleotides in response to infection; these serve as specific second messenger signals. The signals activate the adjacent effector, leading to bacterial cell death and abortive phage infection. A clade C Pycsar system. Its function is as follows. The pyrimidine cyclase gene of a two-gene Pycsar system, weakly generates cyclic UMP (cUMP) from UTP, has little to no activity on ATP, CTP or GTP. Expression of this and adjacent effector GmPycTM (AC P0DV43) probably confers resistance to bacteriophage. The genes are probably only expressed in response to bacteriophage infection. The protein is Uridylate cyclase of Gulbenkiania mobilis.